The primary structure comprises 311 residues: Glycosyltransferase 6 domain-containing protein 1 (311 aa).

The Cytoplasmic segment spans residues 1–5 (MKAKR). The helical; Signal-anchor for type II membrane protein transmembrane segment at 6 to 26 (RILLQLLTFCLFLLLLAKIHF) threads the bilayer. Residues 27–311 (RNHQEEELLL…KIAHHPIDTL (285 aa)) are Lumenal-facing. Asn-77 is a glycosylation site (N-linked (GlcNAc...) asparagine). Substrate is bound by residues 85–90 (FAVGSL), 176–178 (NIN), and 198–201 (HPWW). The active-site Nucleophile is the Glu-266.

This sequence belongs to the glycosyltransferase 6 family. Mn(2+) serves as cofactor.

Its subcellular location is the membrane. This chain is Glycosyltransferase 6 domain-containing protein 1 (Glt6d1), found in Mus musculus (Mouse).